The following is a 315-amino-acid chain: L-lactate dehydrogenase (315 aa).

NAD(+) contacts are provided by residues Val-14, Asp-35, Tyr-67, and 81-82 (GV). Residues Gln-84, Arg-91, and 123-126 (NPVD) each bind substrate. NAD(+) contacts are provided by residues 121–123 (ASN) and Ser-146. 151-154 (DSAR) serves as a coordination point for substrate. His-178 acts as the Proton acceptor in catalysis. Residue Tyr-219 is modified to Phosphotyrosine. Substrate is bound at residue Thr-228.

Belongs to the LDH/MDH superfamily. LDH family. In terms of assembly, homotetramer.

It is found in the cytoplasm. The catalysed reaction is (S)-lactate + NAD(+) = pyruvate + NADH + H(+). Its pathway is fermentation; pyruvate fermentation to lactate; (S)-lactate from pyruvate: step 1/1. Functionally, catalyzes the conversion of lactate to pyruvate. The sequence is that of L-lactate dehydrogenase from Malacoplasma penetrans (strain HF-2) (Mycoplasma penetrans).